A 559-amino-acid chain; its full sequence is DNA ligase (559 aa).

Residue Glu-247 coordinates ATP. Residue Lys-249 is the N6-AMP-lysine intermediate of the active site. The ATP site is built by Arg-254, Arg-269, Glu-299, Phe-339, Arg-414, and Lys-420.

It belongs to the ATP-dependent DNA ligase family. It depends on Mg(2+) as a cofactor.

The enzyme catalyses ATP + (deoxyribonucleotide)n-3'-hydroxyl + 5'-phospho-(deoxyribonucleotide)m = (deoxyribonucleotide)n+m + AMP + diphosphate.. Functionally, DNA ligase that seals nicks in double-stranded DNA during DNA replication, DNA recombination and DNA repair. The chain is DNA ligase from Pyrococcus abyssi (strain GE5 / Orsay).